The following is a 313-amino-acid chain: tRNA dimethylallyltransferase (313 aa).

14-21 provides a ligand contact to ATP; that stretch reads GPTASGKT. Residue 16–21 coordinates substrate; the sequence is TASGKT. 2 interaction with substrate tRNA regions span residues 39 to 42 and 163 to 167; these read DSAL and QRIGR.

Belongs to the IPP transferase family. In terms of assembly, monomer. It depends on Mg(2+) as a cofactor.

It catalyses the reaction adenosine(37) in tRNA + dimethylallyl diphosphate = N(6)-dimethylallyladenosine(37) in tRNA + diphosphate. Catalyzes the transfer of a dimethylallyl group onto the adenine at position 37 in tRNAs that read codons beginning with uridine, leading to the formation of N6-(dimethylallyl)adenosine (i(6)A). The sequence is that of tRNA dimethylallyltransferase from Thiobacillus denitrificans (strain ATCC 25259 / T1).